The primary structure comprises 445 residues: Argininosuccinate synthase (445 aa).

Residues 17 to 25 (AFSGGLDTS) and alanine 43 contribute to the ATP site. Tyrosine 99 is an L-citrulline binding site. Glycine 129 and threonine 131 together coordinate ATP. Residues threonine 131, asparagine 135, and aspartate 136 each contribute to the L-aspartate site. Asparagine 135 contributes to the L-citrulline binding site. Residue aspartate 136 participates in ATP binding. Positions 139 and 192 each coordinate L-citrulline. Aspartate 194 contacts ATP. 3 residues coordinate L-citrulline: threonine 201, glutamate 203, and glutamate 280.

This sequence belongs to the argininosuccinate synthase family. Type 2 subfamily. In terms of assembly, homotetramer.

The protein localises to the cytoplasm. The enzyme catalyses L-citrulline + L-aspartate + ATP = 2-(N(omega)-L-arginino)succinate + AMP + diphosphate + H(+). It functions in the pathway amino-acid biosynthesis; L-arginine biosynthesis; L-arginine from L-ornithine and carbamoyl phosphate: step 2/3. The protein is Argininosuccinate synthase (argG) of Bradyrhizobium diazoefficiens (strain JCM 10833 / BCRC 13528 / IAM 13628 / NBRC 14792 / USDA 110).